A 1375-amino-acid polypeptide reads, in one-letter code: Protein lingerer (1375 aa).

The tract at residues 1–69 (MSTQTRSGGG…KAQPKATTEQ (69 aa)) is disordered. Residues 53-62 (SKTDKPEKAQ) show a composition bias toward basic and acidic residues. Residues 84 to 124 (QINEKVLLLLTMTQRSEEEVCCALNECDYDLEAAANFLIEE) form the UBA domain. Composition is skewed to low complexity over residues 142–161 (ANNT…GNGN) and 173–184 (SNRGGTRGSSDS). A disordered region spans residues 142–286 (ANNTADGAAG…GSGRGGNANE (145 aa)). A compositionally biased stretch (basic and acidic residues) spans 185–204 (RGWRGRETRENERNQRESRE). Residues 228–282 (RNGGGRSGPGGGGRGGGFVSRSGRGGGRMGGRTGGPRGDRGSGGPGGAYGSGRGG) show a composition bias toward gly residues. Residue tyrosine 321 is modified to Phosphotyrosine. Serine 324 is modified (phosphoserine). Polar residues-rich tracts occupy residues 374-387 (VQQG…SSSG) and 395-412 (ATLS…SAAV). 2 disordered regions span residues 374–453 (VQQG…ASPD) and 613–646 (FEPL…QQQQ). Residues 426 to 441 (SGAGTGASAAAGGGAG) show a composition bias toward gly residues. Composition is skewed to low complexity over residues 442-453 (STPSSFVSASPD) and 629-646 (QQQQ…QQQQ). Serine 672 bears the Phosphoserine mark. Threonine 673 carries the phosphothreonine modification. At serine 674 the chain carries Phosphoserine. Residues 750–767 (QGYGSYQPSSYQQQAGSG) are compositionally biased toward low complexity. Disordered stretches follow at residues 750–801 (QGYG…SGNA), 869–894 (SVST…GQTG), 987–1036 (KNTS…GGSG), 1203–1234 (SKGG…DLTS), and 1251–1277 (EKQS…TSAQ). Over residues 768 to 781 (AQSGTGAVSGGGGT) the composition is skewed to gly residues. 3 stretches are compositionally biased toward low complexity: residues 789 to 801 (GGSS…SGNA), 869 to 882 (SVST…NSGS), and 987 to 1008 (KNTS…TGNA). Residues 1009–1036 (SGQGAGASTGGVGSSSGAGGAGSGGGSG) are compositionally biased toward gly residues. Residues 1265-1277 (MPNTQTAGGTSAQ) are compositionally biased toward polar residues.

In terms of tissue distribution, at stage 11, expression is restricted to the neuroblasts, predominant in the central nervous system (CNS), including the brain and ventral nerve cord, and in the PNS. Later embryonic expression is seen in the gonads. Late third instar larvae show expression in the CNS, imaginal disks (including genital, eye-antennal, leg, wing and haltere disks), and gonads. In the larval brain, it is expressed in all of the glial cells and in clusters of neurons that projected contralaterally. In the larval ventral ganglion, it is expressed in subperineurial glia, peripheral exit glia, and a number of interneurons, but not in motor neurons. Isoform B is abundantly expressed in males and females. Isoform D is male specific and expressed at low levels.

It is found in the cytoplasm. Its function is as follows. Acts in the nervous system to mediate the control of copulatory organs during courtship. This Drosophila melanogaster (Fruit fly) protein is Protein lingerer.